Consider the following 459-residue polypeptide: FBD-associated F-box protein At1g61320 (459 aa).

The disordered stretch occupies residues 1-25 (MAPPTKRTRVEMAESSNKRMKPSET). An F-box domain is found at 21-69 (KPSETVPEDVLELMMSTYLPVQSLLTTRVLSKRFRETEVRSLDLDFSGI). The FBD domain maps to 396–428 (VKIIGYKGHWHELDIVEFFVKNAPSLKRLELQM).

This is FBD-associated F-box protein At1g61320 from Arabidopsis thaliana (Mouse-ear cress).